The chain runs to 754 residues: 5-methyltetrahydropteroyltriglutamate--homocysteine methyltransferase (754 aa).

5-methyltetrahydropteroyltri-L-glutamate-binding positions include R17–K20 and K110. L-homocysteine contacts are provided by residues I421–S423 and E474. Residues I421–S423 and E474 contribute to the L-methionine site. Residues R505 to C506 and W551 each bind 5-methyltetrahydropteroyltri-L-glutamate. D589 is an L-homocysteine binding site. L-methionine is bound at residue D589. 5-methyltetrahydropteroyltri-L-glutamate is bound at residue E595. Zn(2+) is bound by residues H631, C633, and E655. Residue H684 is the Proton donor of the active site. C716 contacts Zn(2+).

The protein belongs to the vitamin-B12 independent methionine synthase family. Zn(2+) is required as a cofactor.

It catalyses the reaction 5-methyltetrahydropteroyltri-L-glutamate + L-homocysteine = tetrahydropteroyltri-L-glutamate + L-methionine. Its pathway is amino-acid biosynthesis; L-methionine biosynthesis via de novo pathway; L-methionine from L-homocysteine (MetE route): step 1/1. Functionally, catalyzes the transfer of a methyl group from 5-methyltetrahydrofolate to homocysteine resulting in methionine formation. This chain is 5-methyltetrahydropteroyltriglutamate--homocysteine methyltransferase, found in Synechococcus sp. (strain JA-2-3B'a(2-13)) (Cyanobacteria bacterium Yellowstone B-Prime).